Here is a 762-residue protein sequence, read N- to C-terminus: Polyribonucleotide nucleotidyltransferase (762 aa).

Mg(2+)-binding residues include D531 and D537. A KH domain is found at 597–656 (PRVTTIKVPVDKIGEVIGPKGKVINSITEETGAQISIEDDGTVFVGATDGPSAQAAIDKI). An S1 motif domain is found at 668–737 (GERFLGTVVK…KRGKISLVLV (70 aa)).

This sequence belongs to the polyribonucleotide nucleotidyltransferase family. Mg(2+) serves as cofactor.

The protein localises to the cytoplasm. The catalysed reaction is RNA(n+1) + phosphate = RNA(n) + a ribonucleoside 5'-diphosphate. In terms of biological role, involved in mRNA degradation. Catalyzes the phosphorolysis of single-stranded polyribonucleotides processively in the 3'- to 5'-direction. The sequence is that of Polyribonucleotide nucleotidyltransferase from Mycobacterium marinum (strain ATCC BAA-535 / M).